We begin with the raw amino-acid sequence, 213 residues long: Small ribosomal subunit protein uS5 (213 aa).

One can recognise an S5 DRBM domain in the interval 54–117 (LKSETVDVRL…RNAKLNIIPV (64 aa)).

Belongs to the universal ribosomal protein uS5 family. As to quaternary structure, part of the 30S ribosomal subunit. Contacts protein S4.

Its function is as follows. With S4 and S12 plays an important role in translational accuracy. The polypeptide is Small ribosomal subunit protein uS5 (Hyperthermus butylicus (strain DSM 5456 / JCM 9403 / PLM1-5)).